A 738-amino-acid polypeptide reads, in one-letter code: Vesicle-fusing ATPase (738 aa).

ATP is bound by residues 507 to 512 (NGIINY) and 547 to 554 (PGCGKSSL).

Belongs to the AAA ATPase family. As to quaternary structure, interacts with syn7A, snpA and snpC. It depends on Mg(2+) as a cofactor.

Its subcellular location is the cytoplasmic vesicle membrane. The protein localises to the endosome membrane. The enzyme catalyses ATP + H2O = ADP + phosphate + H(+). Its function is as follows. Required for vesicle-mediated transport. Involved in endocytosis and endosome-endosome fusion. May be required for transport from the endoplasmic reticulum to the Golgi stack, and for the fusion of transport vesicles within the Golgi cisternae. Required for cell polarity, locomotion and chemotaxis. This chain is Vesicle-fusing ATPase (nsfA), found in Dictyostelium discoideum (Social amoeba).